We begin with the raw amino-acid sequence, 427 residues long: Anhydro-N-acetylmuramic acid kinase (427 aa).

Residue Gly-32–Asp-39 coordinates ATP.

The protein belongs to the anhydro-N-acetylmuramic acid kinase family.

The enzyme catalyses 1,6-anhydro-N-acetyl-beta-muramate + ATP + H2O = N-acetyl-D-muramate 6-phosphate + ADP + H(+). It participates in amino-sugar metabolism; 1,6-anhydro-N-acetylmuramate degradation. The protein operates within cell wall biogenesis; peptidoglycan recycling. Its function is as follows. Catalyzes the specific phosphorylation of 1,6-anhydro-N-acetylmuramic acid (anhMurNAc) with the simultaneous cleavage of the 1,6-anhydro ring, generating MurNAc-6-P. Is required for the utilization of anhMurNAc either imported from the medium or derived from its own cell wall murein, and thus plays a role in cell wall recycling. This Psychrobacter cryohalolentis (strain ATCC BAA-1226 / DSM 17306 / VKM B-2378 / K5) protein is Anhydro-N-acetylmuramic acid kinase.